The primary structure comprises 201 residues: uncharacterized protein (201 aa).

This is an uncharacterized protein from Lepidoptera (butterflies and moths).